A 214-amino-acid chain; its full sequence is Ribosomal RNA small subunit methyltransferase G (214 aa).

Residues G81, M86, 132–133, and R147 each bind S-adenosyl-L-methionine; that span reads VE.

This sequence belongs to the methyltransferase superfamily. RNA methyltransferase RsmG family.

The protein localises to the cytoplasm. It catalyses the reaction guanosine(527) in 16S rRNA + S-adenosyl-L-methionine = N(7)-methylguanosine(527) in 16S rRNA + S-adenosyl-L-homocysteine. Its function is as follows. Specifically methylates the N7 position of guanine in position 527 of 16S rRNA. This chain is Ribosomal RNA small subunit methyltransferase G, found in Pseudomonas fluorescens (strain Pf0-1).